The primary structure comprises 71 residues: Small, acid-soluble spore protein I (71 aa).

Belongs to the SspI family.

It is found in the spore core. The sequence is that of Small, acid-soluble spore protein I from Geobacillus sp. (strain WCH70).